Here is a 652-residue protein sequence, read N- to C-terminus: Carboxypeptidase Z (652 aa).

The N-terminal stretch at 1 to 18 (MPPPLPLLLLTVLVVAAA) is a signal peptide. The 134-residue stretch at 27-160 (NPAGECHRPP…TREDEGCYDP (134 aa)) folds into the FZ domain. 5 disulfides stabilise this stretch: Cys43–Cys109, Cys51–Cys102, Cys93–Cys129, Cys118–Cys157, and Cys122–Cys146. Residues 186–502 (SHHSYAQMVR…ESLLNFVETV (317 aa)) enclose the Peptidase M14 domain. The Zn(2+) site is built by His248 and Glu251. N-linked (GlcNAc...) asparagine glycosylation occurs at Asn281. His380 serves as a coordination point for Zn(2+). Glu472 acts as the Proton donor/acceptor in catalysis. The tract at residues 595–629 (LRRTGPHDPLGGASSLGEATEPDPLRARRQPSADG) is disordered.

The protein belongs to the peptidase M14 family. The cofactor is Zn(2+). In terms of tissue distribution, in placenta, it is present within invasive trophoblasts and in the surrounding extracellular space. Also present in amnion cells, but is not readily apparent in the extracellular matrix of this cell type. Present in normal pituitary gland and neoplastic pituitary gland (especially POMC-, GH- and PRL-producing adenomas) (at protein level). Widely expressed.

It is found in the secreted. The protein localises to the extracellular space. Its subcellular location is the extracellular matrix. Its activity is regulated as follows. Inhibited by 2-mercaptomethyl-3-guanidinoethylthiopropanoic acid (MGTA) and guanidinoethylmercaptosuccinic acid (GEMSA). Inhibited by chelating agents such as EDTA and EGTA. Its function is as follows. Cleaves substrates with C-terminal arginine residues. Probably modulates the Wnt signaling pathway, by cleaving some undefined protein. May play a role in cleavage during prohormone processing. This Homo sapiens (Human) protein is Carboxypeptidase Z (CPZ).